We begin with the raw amino-acid sequence, 1194 residues long: Peroxisomal ATPase PEX1 (1194 aa).

The interval 220-255 (KTRQRRMSHQGKSVKAKSLASTRHGKRRDDGSGPSG) is disordered. Basic residues predominate over residues 221-234 (TRQRRMSHQGKSVK). The tract at residues 538–730 (RSASVLLTGA…GPEPTLKIEK (193 aa)) is AAA-cassette D1. ATP-binding positions include 546–553 (GARGSGKT) and 849–856 (GYPGCGKT). An AAA-cassette D2 region spans residues 844–1028 (GLLLYGYPGC…LYNAHLEAIH (185 aa)). Disordered regions lie at residues 1062–1084 (YISF…LTNG), 1116–1139 (QVQQ…EPVI), and 1174–1194 (RSGE…SSLM). Positions 1066–1084 (SMGNKDSTGEPSTQPLTNG) are enriched in polar residues. Positions 1116 to 1127 (QVQQQQSQTNQA) are enriched in low complexity.

The protein belongs to the AAA ATPase family. In terms of assembly, interacts with PEX6; forming the PEX1-PEX6 AAA ATPase complex, which is composed of a heterohexamer formed by a trimer of PEX1-PEX6 dimers.

The protein localises to the cytoplasm. It localises to the cytosol. Its subcellular location is the peroxisome membrane. It carries out the reaction ATP + H2O = ADP + phosphate + H(+). Functionally, component of the PEX1-PEX6 AAA ATPase complex, a protein dislocase complex that mediates the ATP-dependent extraction of the PEX5 receptor from peroxisomal membranes, an essential step for PEX5 recycling. Specifically recognizes PEX5 monoubiquitinated at 'Cys-6', and pulls it out of the peroxisome lumen through the PEX2-PEX10-PEX12 retrotranslocation channel. Extraction by the PEX1-PEX6 AAA ATPase complex is accompanied by unfolding of the TPR repeats and release of bound cargo from PEX5. Regulates autophagy and biogenesis of peroxisomes and Woronin bodies. Plays important roles in mycelial growth and development and stress response. Is also essential for conidiation and fatty acid utilization. Required for nematode predation via trap formation. The chain is Peroxisomal ATPase PEX1 from Arthrobotrys oligospora (strain ATCC 24927 / CBS 115.81 / DSM 1491) (Nematode-trapping fungus).